The sequence spans 233 residues: H-2 class II histocompatibility antigen, A-R alpha chain (233 aa).

The segment at 1–88 (EDDIEADHVG…KRSNFTPAAN (88 aa)) is alpha-1. At 1 to 195 (EDDIEADHVG…IPAPMSELTE (195 aa)) the chain is on the extracellular side. The interval 89-182 (EAPQATVFPK…GLEEPVLKHW (94 aa)) is alpha-2. One can recognise an Ig-like C1-type domain in the interval 91 to 183 (PQATVFPKSP…LEEPVLKHWE (93 aa)). An intrachain disulfide couples cysteine 111 to cysteine 167. N-linked (GlcNAc...) asparagine glycosylation is present at asparagine 122. The tract at residues 183 to 195 (EPEIPAPMSELTE) is connecting peptide. The chain crosses the membrane as a helical span at residues 196 to 221 (TVVCALGLSVGLVGIVVGTIFIIQGL). The Cytoplasmic portion of the chain corresponds to 222–233 (RSGGTSRHPGPL).

Belongs to the MHC class II family.

Its subcellular location is the membrane. The chain is H-2 class II histocompatibility antigen, A-R alpha chain (H2-Aa) from Mus musculus (Mouse).